The chain runs to 388 residues: Diacylglycerol O-acyltransferase 2 (388 aa).

Residues 1 to 69 lie on the Cytoplasmic side of the membrane; sequence MKTLIAAYSG…NRSKVEKQLQ (69 aa). The helical transmembrane segment at 70 to 88 threads the bilayer; the sequence is VISVLQWVLSFLVLGVACS. Residues 89–92 are Lumenal-facing; it reads VILM. Residues 93–112 traverse the membrane as a helical segment; that stretch reads YTFCTDCWLIAVLYFTWLAF. The Cytoplasmic segment spans residues 113–388; that stretch reads DWNTPKKGGR…LPETEVLEVN (276 aa).

The protein belongs to the diacylglycerol acyltransferase family. Forms multimeric complexes consisting of several DGAT2 subunits. Interacts with SLC27A1 and this interaction is enhanced in the presence of ZFYVE1. In terms of tissue distribution, predominantly expressed in liver. Also expressed in testis.

It is found in the endoplasmic reticulum membrane. The protein localises to the lipid droplet. It localises to the cytoplasm. The protein resides in the perinuclear region. It catalyses the reaction an acyl-CoA + a 1,2-diacyl-sn-glycerol = a triacyl-sn-glycerol + CoA. The catalysed reaction is all-trans-retinol + an acyl-CoA = an all-trans-retinyl ester + CoA. The enzyme catalyses 1,2-di-(9Z-octadecenoyl)-sn-glycerol + hexadecanoyl-CoA = 1,2-di-(9Z)-octadecenoyl-3-hexadecanoyl-sn-glycerol + CoA. It carries out the reaction 1,2-di-(9Z-octadecenoyl)-sn-glycerol + (9Z)-octadecenoyl-CoA = 1,2,3-tri-(9Z-octadecenoyl)-glycerol + CoA. It catalyses the reaction 1,3-di-(9Z-octadecenoyl)-glycerol + (9Z)-octadecenoyl-CoA = 1,2,3-tri-(9Z-octadecenoyl)-glycerol + CoA. The catalysed reaction is 2,3-di-(9Z)-octadecenoyl-sn-glycerol + (9Z)-octadecenoyl-CoA = 1,2,3-tri-(9Z-octadecenoyl)-glycerol + CoA. The enzyme catalyses 2-(9Z-octadecenoyl)-glycerol + hexadecanoyl-CoA = 1-hexadecanoyl-2-(9Z-octadecenoyl)-sn-glycerol + CoA. It carries out the reaction 2-(9Z-octadecenoyl)-glycerol + (9Z)-octadecenoyl-CoA = 1,2-di-(9Z-octadecenoyl)-sn-glycerol + CoA. It catalyses the reaction all-trans-retinol + hexadecanoyl-CoA = all-trans-retinyl hexadecanoate + CoA. The catalysed reaction is 1-O-(9Z-octadecenyl)-glycerol + (9Z)-octadecenoyl-CoA = 1-O-(9Z-octadecyl)-3-(9Z-octadecenoyl)-glycerol + CoA. The enzyme catalyses 1-(9Z-octadecenoyl)-glycerol + (9Z)-octadecenoyl-CoA = 1,2-di-(9Z-octadecenoyl)-glycerol + CoA. It functions in the pathway glycerolipid metabolism; triacylglycerol biosynthesis. Its activity is regulated as follows. Inhibited by niacin. In terms of biological role, essential acyltransferase that catalyzes the terminal and only committed step in triacylglycerol synthesis by using diacylglycerol and fatty acyl CoA as substrates. Required for synthesis and storage of intracellular triglycerides. Probably plays a central role in cytosolic lipid accumulation. In liver, is primarily responsible for incorporating endogenously synthesized fatty acids into triglycerides. Also functions as an acyl-CoA retinol acyltransferase (ARAT). Also able to use 1-monoalkylglycerol (1-MAkG) as an acyl acceptor for the synthesis of monoalkyl-monoacylglycerol (MAMAG). The protein is Diacylglycerol O-acyltransferase 2 of Mus musculus (Mouse).